Here is a 99-residue protein sequence, read N- to C-terminus: Acylphosphatase (99 aa).

The Acylphosphatase-like domain occupies 5-97 (VRQIVIRGRV…RPGERFSQLP (93 aa)). Catalysis depends on residues Arg-20 and Asn-38.

It belongs to the acylphosphatase family.

It carries out the reaction an acyl phosphate + H2O = a carboxylate + phosphate + H(+). The polypeptide is Acylphosphatase (acyP) (Nitrobacter hamburgensis (strain DSM 10229 / NCIMB 13809 / X14)).